Consider the following 85-residue polypeptide: MCVSRLVLLFGLLLCVGAQLSNAQHWSHGWYPGGKRELDSFGTSEISEEIKLCEAGECSYLRPQRRSVLRNIILDALARELQKRK.

A signal peptide spans 1 to 23 (MCVSRLVLLFGLLLCVGAQLSNA). Gln24 carries the pyrrolidone carboxylic acid modification. Gly33 carries the glycine amide modification.

It belongs to the GnRH family.

The protein localises to the secreted. In terms of biological role, stimulates the secretion of gonadotropins. This chain is Progonadoliberin-2 (gnrh2), found in Dicentrarchus labrax (European seabass).